The sequence spans 162 residues: Xanthine-guanine phosphoribosyltransferase (162 aa).

5-phospho-alpha-D-ribose 1-diphosphate contacts are provided by residues 41-42 and 92-100; these read RG and DDLVDTGNT. Residue Asp93 participates in Mg(2+) binding. Residues Asp96 and Ile139 each coordinate guanine. Residues Asp96 and Ile139 each coordinate xanthine. GMP is bound by residues 96 to 100 and 138 to 139; these read DTGNT and WI.

The protein belongs to the purine/pyrimidine phosphoribosyltransferase family. XGPT subfamily. In terms of assembly, homotetramer. It depends on Mg(2+) as a cofactor.

It is found in the cell inner membrane. The catalysed reaction is GMP + diphosphate = guanine + 5-phospho-alpha-D-ribose 1-diphosphate. It catalyses the reaction XMP + diphosphate = xanthine + 5-phospho-alpha-D-ribose 1-diphosphate. It carries out the reaction IMP + diphosphate = hypoxanthine + 5-phospho-alpha-D-ribose 1-diphosphate. The protein operates within purine metabolism; GMP biosynthesis via salvage pathway; GMP from guanine: step 1/1. It functions in the pathway purine metabolism; XMP biosynthesis via salvage pathway; XMP from xanthine: step 1/1. Its function is as follows. Purine salvage pathway enzyme that catalyzes the transfer of the ribosyl-5-phosphate group from 5-phospho-alpha-D-ribose 1-diphosphate (PRPP) to the N9 position of the 6-oxopurines guanine and xanthine to form the corresponding ribonucleotides GMP (guanosine 5'-monophosphate) and XMP (xanthosine 5'-monophosphate), with the release of PPi. To a lesser extent, also acts on hypoxanthine. The protein is Xanthine-guanine phosphoribosyltransferase of Chromohalobacter salexigens (strain ATCC BAA-138 / DSM 3043 / CIP 106854 / NCIMB 13768 / 1H11).